Consider the following 301-residue polypeptide: tRNA-cytidine(32) 2-sulfurtransferase (301 aa).

Positions 47 to 52 (SGGKDS) match the PP-loop motif motif. Residues C122, C125, and C213 each coordinate [4Fe-4S] cluster.

The protein belongs to the TtcA family. In terms of assembly, homodimer. Requires Mg(2+) as cofactor. The cofactor is [4Fe-4S] cluster.

The protein localises to the cytoplasm. It carries out the reaction cytidine(32) in tRNA + S-sulfanyl-L-cysteinyl-[cysteine desulfurase] + AH2 + ATP = 2-thiocytidine(32) in tRNA + L-cysteinyl-[cysteine desulfurase] + A + AMP + diphosphate + H(+). It functions in the pathway tRNA modification. Functionally, catalyzes the ATP-dependent 2-thiolation of cytidine in position 32 of tRNA, to form 2-thiocytidine (s(2)C32). The sulfur atoms are provided by the cysteine/cysteine desulfurase (IscS) system. This Photobacterium profundum (strain SS9) protein is tRNA-cytidine(32) 2-sulfurtransferase.